Here is a 194-residue protein sequence, read N- to C-terminus: Large ribosomal subunit protein bL9 (194 aa).

Belongs to the bacterial ribosomal protein bL9 family.

Its function is as follows. Binds to the 23S rRNA. This chain is Large ribosomal subunit protein bL9, found in Rhodopseudomonas palustris (strain BisA53).